Reading from the N-terminus, the 150-residue chain is Large ribosomal subunit protein bL9 (150 aa).

This sequence belongs to the bacterial ribosomal protein bL9 family.

Binds to the 23S rRNA. This chain is Large ribosomal subunit protein bL9, found in Neisseria meningitidis serogroup C / serotype 2a (strain ATCC 700532 / DSM 15464 / FAM18).